The primary structure comprises 143 residues: Transcriptional regulator MraZ (143 aa).

SpoVT-AbrB domains follow at residues 5 to 47 and 76 to 119; these read EYFH…PVSA and ASNQ…DKEK.

This sequence belongs to the MraZ family. Forms oligomers.

It localises to the cytoplasm. Its subcellular location is the nucleoid. The protein is Transcriptional regulator MraZ of Finegoldia magna (strain ATCC 29328 / DSM 20472 / WAL 2508) (Peptostreptococcus magnus).